We begin with the raw amino-acid sequence, 249 residues long: DNA repair protein RecO (249 aa).

This sequence belongs to the RecO family.

Its function is as follows. Involved in DNA repair and RecF pathway recombination. This Leptospira biflexa serovar Patoc (strain Patoc 1 / Ames) protein is DNA repair protein RecO.